A 401-amino-acid polypeptide reads, in one-letter code: Acetate kinase (401 aa).

N7 contacts Mg(2+). Residue K14 participates in ATP binding. R90 lines the substrate pocket. D147 serves as the catalytic Proton donor/acceptor. ATP is bound by residues 207 to 211 (HMGNG), 282 to 284 (DMR), and 331 to 335 (GIGEN). Position 385 (E385) interacts with Mg(2+).

The protein belongs to the acetokinase family. As to quaternary structure, homodimer. The cofactor is Mg(2+). It depends on Mn(2+) as a cofactor.

It localises to the cytoplasm. It catalyses the reaction acetate + ATP = acetyl phosphate + ADP. The protein operates within metabolic intermediate biosynthesis; acetyl-CoA biosynthesis; acetyl-CoA from acetate: step 1/2. Its function is as follows. Catalyzes the formation of acetyl phosphate from acetate and ATP. Can also catalyze the reverse reaction. The sequence is that of Acetate kinase from Clostridium acetobutylicum (strain ATCC 824 / DSM 792 / JCM 1419 / IAM 19013 / LMG 5710 / NBRC 13948 / NRRL B-527 / VKM B-1787 / 2291 / W).